A 109-amino-acid polypeptide reads, in one-letter code: Putative antitoxin HigA3 (109 aa).

The 57-residue stretch at 41–97 folds into the HTH cro/C1-type domain; the sequence is LAEIRKALGHARQADVAALMGVSQARVSKLESGDLSHTELGTLQAYVAALGGHLRIV. Residues 53–72 constitute a DNA-binding region (H-T-H motif); that stretch reads QADVAALMGVSQARVSKLES.

Putative antitoxin component of a type II toxin-antitoxin (TA) system. Its cognate toxin would be HigB3. The sequence is that of Putative antitoxin HigA3 from Mycobacterium tuberculosis (strain ATCC 25618 / H37Rv).